The following is a 276-amino-acid chain: Ribosomal RNA small subunit methyltransferase A (276 aa).

S-adenosyl-L-methionine-binding residues include Asn-27, Leu-29, Gly-54, Glu-75, Asp-101, and Asn-123.

It belongs to the class I-like SAM-binding methyltransferase superfamily. rRNA adenine N(6)-methyltransferase family. RsmA subfamily.

The protein localises to the cytoplasm. It carries out the reaction adenosine(1518)/adenosine(1519) in 16S rRNA + 4 S-adenosyl-L-methionine = N(6)-dimethyladenosine(1518)/N(6)-dimethyladenosine(1519) in 16S rRNA + 4 S-adenosyl-L-homocysteine + 4 H(+). In terms of biological role, specifically dimethylates two adjacent adenosines (A1518 and A1519) in the loop of a conserved hairpin near the 3'-end of 16S rRNA in the 30S particle. May play a critical role in biogenesis of 30S subunits. This Bartonella quintana (strain Toulouse) (Rochalimaea quintana) protein is Ribosomal RNA small subunit methyltransferase A.